Here is a 357-residue protein sequence, read N- to C-terminus: DNA integrity scanning protein DisA (357 aa).

Positions 8-146 (VKSMINILQL…GNLRYTLKDI (139 aa)) constitute a DAC domain. ATP is bound by residues Gly-75, Leu-93, and 106–110 (MRHRT).

The protein belongs to the DisA family. Homooctamer. Requires Mg(2+) as cofactor.

The enzyme catalyses 2 ATP = 3',3'-c-di-AMP + 2 diphosphate. Participates in a DNA-damage check-point that is active prior to asymmetric division when DNA is damaged. DisA forms globular foci that rapidly scan along the chromosomes during sporulation, searching for lesions. When a lesion is present, DisA pauses at the lesion site. This triggers a cellular response that culminates in a temporary block in sporulation initiation. Its function is as follows. Also has diadenylate cyclase activity, catalyzing the condensation of 2 ATP molecules into cyclic di-AMP (c-di-AMP). c-di-AMP acts as a signaling molecule that couples DNA integrity with progression of sporulation. The rise in c-di-AMP level generated by DisA while scanning the chromosome, operates as a positive signal that advances sporulation; upon encountering a lesion, the DisA focus arrests at the damaged site and halts c-di-AMP synthesis. This chain is DNA integrity scanning protein DisA, found in Bacillus cereus (strain ATCC 14579 / DSM 31 / CCUG 7414 / JCM 2152 / NBRC 15305 / NCIMB 9373 / NCTC 2599 / NRRL B-3711).